The chain runs to 77 residues: MPFDIPVETLLIATLYLSLSVTYLLVLPAGLYFYLNNRWYVASSIERLVMYFFVFFLFPGMLLLSPFLNFRPRRREV.

2 helical membrane-spanning segments follow: residues 10 to 30 (LLIATLYLSLSVTYLLVLPAG) and 48 to 68 (LVMYFFVFFLFPGMLLLSPFL).

Belongs to the complex I NdhL subunit family. In terms of assembly, NDH-1 can be composed of about 15 different subunits; different subcomplexes with different compositions have been identified which probably have different functions.

The protein resides in the cellular thylakoid membrane. The enzyme catalyses a plastoquinone + NADH + (n+1) H(+)(in) = a plastoquinol + NAD(+) + n H(+)(out). The catalysed reaction is a plastoquinone + NADPH + (n+1) H(+)(in) = a plastoquinol + NADP(+) + n H(+)(out). NDH-1 shuttles electrons from an unknown electron donor, via FMN and iron-sulfur (Fe-S) centers, to quinones in the respiratory and/or the photosynthetic chain. The immediate electron acceptor for the enzyme in this species is believed to be plastoquinone. Couples the redox reaction to proton translocation, and thus conserves the redox energy in a proton gradient. Cyanobacterial NDH-1 also plays a role in inorganic carbon-concentration. The protein is NAD(P)H-quinone oxidoreductase subunit L of Picosynechococcus sp. (strain ATCC 27264 / PCC 7002 / PR-6) (Agmenellum quadruplicatum).